Reading from the N-terminus, the 306-residue chain is Methionyl-tRNA formyltransferase (306 aa).

110-113 (SLLP) provides a ligand contact to (6S)-5,6,7,8-tetrahydrofolate.

Belongs to the Fmt family.

The enzyme catalyses L-methionyl-tRNA(fMet) + (6R)-10-formyltetrahydrofolate = N-formyl-L-methionyl-tRNA(fMet) + (6S)-5,6,7,8-tetrahydrofolate + H(+). Its function is as follows. Attaches a formyl group to the free amino group of methionyl-tRNA(fMet). The formyl group appears to play a dual role in the initiator identity of N-formylmethionyl-tRNA by promoting its recognition by IF2 and preventing the misappropriation of this tRNA by the elongation apparatus. This Brucella melitensis biotype 2 (strain ATCC 23457) protein is Methionyl-tRNA formyltransferase.